Reading from the N-terminus, the 34-residue chain is Protamine-Y1/Y2 (34 aa).

The disordered stretch occupies residues 1-34 (PRRRRQASRPVRRRRRYRRSTAARRRRRVVRRRR).

As to expression, testis.

The protein resides in the nucleus. It localises to the chromosome. In terms of biological role, protamines substitute for histones in the chromatin of sperm during the haploid phase of spermatogenesis. They compact sperm DNA into a highly condensed, stable and inactive complex. This is Protamine-Y1/Y2 from Thunnus thynnus (Atlantic bluefin tuna).